Reading from the N-terminus, the 92-residue chain is Putative transmembrane protein ORF92 (92 aa).

Helical transmembrane passes span 11-28 (FVKGIVLLALTSGATYAI), 32-52 (FFSSNYCAIARIIQALLLFAS), and 54-74 (FLFDSAGALILGVIVLIIGVG).

It is found in the host membrane. This Acidianus convivator (ABV) protein is Putative transmembrane protein ORF92.